The following is a 136-amino-acid chain: Nucleoside diphosphate kinase (136 aa).

Residues lysine 10, phenylalanine 58, arginine 86, threonine 92, arginine 104, and asparagine 114 each coordinate ATP. Histidine 117 serves as the catalytic Pros-phosphohistidine intermediate.

Belongs to the NDK family. Homotetramer. It depends on Mg(2+) as a cofactor.

The protein localises to the cytoplasm. It catalyses the reaction a 2'-deoxyribonucleoside 5'-diphosphate + ATP = a 2'-deoxyribonucleoside 5'-triphosphate + ADP. The catalysed reaction is a ribonucleoside 5'-diphosphate + ATP = a ribonucleoside 5'-triphosphate + ADP. In terms of biological role, major role in the synthesis of nucleoside triphosphates other than ATP. The ATP gamma phosphate is transferred to the NDP beta phosphate via a ping-pong mechanism, using a phosphorylated active-site intermediate. The sequence is that of Nucleoside diphosphate kinase from Mycobacteroides abscessus (strain ATCC 19977 / DSM 44196 / CCUG 20993 / CIP 104536 / JCM 13569 / NCTC 13031 / TMC 1543 / L948) (Mycobacterium abscessus).